The following is a 318-amino-acid chain: tRNA dimethylallyltransferase (318 aa).

Glycine 28–serine 35 contributes to the ATP binding site. Threonine 30–serine 35 is a substrate binding site. The interval aspartate 53 to glutamine 56 is interaction with substrate tRNA.

Belongs to the IPP transferase family. Monomer. It depends on Mg(2+) as a cofactor.

It catalyses the reaction adenosine(37) in tRNA + dimethylallyl diphosphate = N(6)-dimethylallyladenosine(37) in tRNA + diphosphate. Its function is as follows. Catalyzes the transfer of a dimethylallyl group onto the adenine at position 37 in tRNAs that read codons beginning with uridine, leading to the formation of N6-(dimethylallyl)adenosine (i(6)A). This chain is tRNA dimethylallyltransferase, found in Parafrankia sp. (strain EAN1pec).